Here is a 439-residue protein sequence, read N- to C-terminus: Vacuolar zinc transporter COT1 (439 aa).

Residues 1–9 (MKLGSKQVK) are Cytoplasmic-facing. The chain crosses the membrane as a helical span at residues 10-30 (IISLLLLDTVFFGIEITTGYL). Over 31–33 (SHS) the chain is Vacuolar. The helical transmembrane segment at 34 to 54 (LALIADSFHMLNDIISLVVAL) threads the bilayer. Over 55 to 76 (WAVNVAKNRNPDSTYTYGWKRA) the chain is Cytoplasmic. Residues 77 to 97 (EILGALINAVFLIALCVSILI) traverse the membrane as a helical segment. Residues 98 to 113 (EALQRIIAPPVIENPK) lie on the Vacuolar side of the membrane. Residues 114–134 (FVLYVGVAGLISNTVGLFLFH) form a helical membrane-spanning segment. Residues 135 to 244 (DNDQEHGHGH…RKRSLNMHGV (110 aa)) lie on the Cytoplasmic side of the membrane. Short sequence motifs (histidine repeat) lie at residues 140–144 (HGHGH), 165–169 (HTHAH), and 219–223 (SSHTI). The segment covering 207-230 (PENASKTPSYSTSSHTIASGGNYT) has biased composition (polar residues). A disordered region spans residues 207 to 231 (PENASKTPSYSTSSHTIASGGNYTE). Ser225 carries the post-translational modification Phosphoserine. Residues 245 to 265 (FLHVLGDALGNIGVMLSAFFI) traverse the membrane as a helical segment. Residues 266–274 (WKTDYSWKY) lie on the Vacuolar side of the membrane. The helical transmembrane segment at 275–295 (YTDPLVSLIITGIIFSSALPL) threads the bilayer. Residues 296 to 439 (SCKASKILLQ…CNTADCLEDH (144 aa)) are Cytoplasmic-facing. Residue Lys301 forms a Glycyl lysine isopeptide (Lys-Gly) (interchain with G-Cter in ubiquitin) linkage. The span at 388–402 (TSTERAGDSQGDHLQ) shows a compositional bias: basic and acidic residues. The segment at 388–408 (TSTERAGDSQGDHLQNDPLSL) is disordered.

It belongs to the cation diffusion facilitator (CDF) transporter (TC 2.A.4) family. SLC30A subfamily.

The protein resides in the vacuole membrane. It catalyses the reaction Zn(2+)(in) = Zn(2+)(out). Its function is as follows. Vacuolar transporter that regulates zinc homeostasis by mediating zinc transport and storage into the vacuole. Plays a role in resistance to zinc shock resulting from sudden influx of zinc into cytoplasm. May also participate in the regulation of cobalt levels under normal physiological conditions and may be important in the supply of metal that is required for metalloenzyme or cofactor synthesis. Involved in the resistance to cobalt and rhodium ions. The chain is Vacuolar zinc transporter COT1 from Saccharomyces cerevisiae (strain ATCC 204508 / S288c) (Baker's yeast).